A 125-amino-acid polypeptide reads, in one-letter code: Phosphoribosyl-AMP cyclohydrolase (125 aa).

Aspartate 74 contacts Mg(2+). A Zn(2+)-binding site is contributed by cysteine 75. Residues aspartate 76 and aspartate 78 each contribute to the Mg(2+) site. Cysteine 92 and cysteine 99 together coordinate Zn(2+).

The protein belongs to the PRA-CH family. As to quaternary structure, homodimer. The cofactor is Mg(2+). Requires Zn(2+) as cofactor.

It localises to the cytoplasm. The catalysed reaction is 1-(5-phospho-beta-D-ribosyl)-5'-AMP + H2O = 1-(5-phospho-beta-D-ribosyl)-5-[(5-phospho-beta-D-ribosylamino)methylideneamino]imidazole-4-carboxamide. It functions in the pathway amino-acid biosynthesis; L-histidine biosynthesis; L-histidine from 5-phospho-alpha-D-ribose 1-diphosphate: step 3/9. In terms of biological role, catalyzes the hydrolysis of the adenine ring of phosphoribosyl-AMP. The polypeptide is Phosphoribosyl-AMP cyclohydrolase (Pelobacter propionicus (strain DSM 2379 / NBRC 103807 / OttBd1)).